Consider the following 366-residue polypeptide: Type 2 DNA topoisomerase 6 subunit A (366 aa).

The Topo IIA-type catalytic domain maps to 7–146; it reads SDETEARDQL…FHMRPEESGA (140 aa). Residue Tyr101 is the O-(5'-phospho-DNA)-tyrosine intermediate of the active site. Mg(2+)-binding residues include Glu199 and Asp251.

This sequence belongs to the TOP6A family. As to quaternary structure, homodimer. Heterotetramer of two Top6A and two Top6B chains. It depends on Mg(2+) as a cofactor.

It catalyses the reaction ATP-dependent breakage, passage and rejoining of double-stranded DNA.. Its function is as follows. Relaxes both positive and negative superturns and exhibits a strong decatenase activity. The protein is Type 2 DNA topoisomerase 6 subunit A of Halobacterium salinarum (strain ATCC 700922 / JCM 11081 / NRC-1) (Halobacterium halobium).